Consider the following 50-residue polypeptide: F420-non-reducing hydrogenase vhu subunit U (50 aa).

Ni(2+)-binding residues include U27 and C30. Residue U27 is a non-standard amino acid, selenocysteine. Residues 34 to 50 constitute a propeptide, removed in mature form; it reads IIVKDEKGNKIIEVIKE.

It belongs to the [NiFe]/[NiFeSe] hydrogenase large subunit family. As to quaternary structure, the F420-non-reducing hydrogenase vhu is composed of four subunits; VhuA, VhuD, VhuG and VhuU. Ni(2+) is required as a cofactor.

The polypeptide is F420-non-reducing hydrogenase vhu subunit U (vhuU) (Methanocaldococcus jannaschii (strain ATCC 43067 / DSM 2661 / JAL-1 / JCM 10045 / NBRC 100440) (Methanococcus jannaschii)).